A 238-amino-acid polypeptide reads, in one-letter code: Thiamine import ATP-binding protein ThiQ (238 aa).

The ABC transporter domain occupies 1–234; it reads MSSTALAVKG…RDIAAINRFL (234 aa). 36–43 provides a ligand contact to ATP; that stretch reads GASGSGKS.

The protein belongs to the ABC transporter superfamily. Thiamine importer (TC 3.A.1.19.1) family. The complex is composed of two ATP-binding proteins (ThiQ), two transmembrane proteins (ThiP) and a solute-binding protein (ThiB).

Its subcellular location is the cell inner membrane. It carries out the reaction thiamine(out) + ATP + H2O = thiamine(in) + ADP + phosphate + H(+). In terms of biological role, part of the ABC transporter complex ThiBPQ involved in thiamine import. Responsible for energy coupling to the transport system. In Rhizobium meliloti (strain 1021) (Ensifer meliloti), this protein is Thiamine import ATP-binding protein ThiQ.